Reading from the N-terminus, the 307-residue chain is Ubiquinol oxidase subunit 2 (307 aa).

Positions 1-23 are cleaved as a signal peptide; it reads MKNKLLARVARLGGLSSALLLAG. Cys-24 is lipidated: N-palmitoyl cysteine. Cys-24 carries the S-diacylglycerol cysteine lipid modification. Helical transmembrane passes span 46 to 66 and 87 to 107; these read STVAMLIVVIPTILETLLFAW and IEVTIWGVPSLIILFLAVITY.

The protein belongs to the cytochrome c oxidase subunit 2 family. Heterotetramer of the subunits 1, 2, 3 and 4.

The protein localises to the cell membrane. The chain is Ubiquinol oxidase subunit 2 (cyaB) from Acetobacter aceti.